Here is a 470-residue protein sequence, read N- to C-terminus: Methylenetetrahydrofolate--tRNA-(uracil-5-)-methyltransferase TrmFO (470 aa).

FAD is bound at residue 10 to 15 (GAGLAG).

It belongs to the MnmG family. TrmFO subfamily. Requires FAD as cofactor.

It is found in the cytoplasm. It catalyses the reaction uridine(54) in tRNA + (6R)-5,10-methylene-5,6,7,8-tetrahydrofolate + NADH + H(+) = 5-methyluridine(54) in tRNA + (6S)-5,6,7,8-tetrahydrofolate + NAD(+). It carries out the reaction uridine(54) in tRNA + (6R)-5,10-methylene-5,6,7,8-tetrahydrofolate + NADPH + H(+) = 5-methyluridine(54) in tRNA + (6S)-5,6,7,8-tetrahydrofolate + NADP(+). In terms of biological role, catalyzes the folate-dependent formation of 5-methyl-uridine at position 54 (M-5-U54) in all tRNAs. This Prochlorococcus marinus (strain MIT 9312) protein is Methylenetetrahydrofolate--tRNA-(uracil-5-)-methyltransferase TrmFO.